The chain runs to 179 residues: Large ribosomal subunit protein uL5 (179 aa).

It belongs to the universal ribosomal protein uL5 family. In terms of assembly, part of the 50S ribosomal subunit; part of the 5S rRNA/L5/L18/L25 subcomplex. Contacts the 5S rRNA and the P site tRNA. Forms a bridge to the 30S subunit in the 70S ribosome.

Its function is as follows. This is one of the proteins that bind and probably mediate the attachment of the 5S RNA into the large ribosomal subunit, where it forms part of the central protuberance. In the 70S ribosome it contacts protein S13 of the 30S subunit (bridge B1b), connecting the 2 subunits; this bridge is implicated in subunit movement. Contacts the P site tRNA; the 5S rRNA and some of its associated proteins might help stabilize positioning of ribosome-bound tRNAs. The chain is Large ribosomal subunit protein uL5 from Geotalea daltonii (strain DSM 22248 / JCM 15807 / FRC-32) (Geobacter daltonii).